The following is a 127-amino-acid chain: Fluoride-specific ion channel FluC 2 (127 aa).

The next 4 helical transmembrane spans lie at 4-24 (IIAI…LSLL), 31-51 (FWIT…ITNL), 62-82 (IVIG…TFTF), and 94-114 (VLAL…GLAG). Na(+) contacts are provided by G72 and T75.

The protein belongs to the fluoride channel Fluc/FEX (TC 1.A.43) family.

The protein localises to the cell membrane. The catalysed reaction is fluoride(in) = fluoride(out). Its activity is regulated as follows. Na(+) is not transported, but it plays an essential structural role and its presence is essential for fluoride channel function. Functionally, fluoride-specific ion channel. Important for reducing fluoride concentration in the cell, thus reducing its toxicity. The chain is Fluoride-specific ion channel FluC 2 from Lactiplantibacillus plantarum (strain ATCC BAA-793 / NCIMB 8826 / WCFS1) (Lactobacillus plantarum).